The sequence spans 405 residues: Imidazolonepropionase (405 aa).

Fe(3+)-binding residues include His-72 and His-74. Residues His-72 and His-74 each coordinate Zn(2+). Arg-81, Tyr-144, and His-177 together coordinate 4-imidazolone-5-propanoate. Tyr-144 provides a ligand contact to N-formimidoyl-L-glutamate. His-242 is a binding site for Fe(3+). His-242 is a binding site for Zn(2+). Gln-245 is a binding site for 4-imidazolone-5-propanoate. A Fe(3+)-binding site is contributed by Asp-317. Asp-317 is a binding site for Zn(2+). Residues Asn-319 and Gly-321 each coordinate N-formimidoyl-L-glutamate. Thr-322 contacts 4-imidazolone-5-propanoate.

It belongs to the metallo-dependent hydrolases superfamily. HutI family. It depends on Zn(2+) as a cofactor. Fe(3+) serves as cofactor.

It is found in the cytoplasm. The enzyme catalyses 4-imidazolone-5-propanoate + H2O = N-formimidoyl-L-glutamate. It functions in the pathway amino-acid degradation; L-histidine degradation into L-glutamate; N-formimidoyl-L-glutamate from L-histidine: step 3/3. Catalyzes the hydrolytic cleavage of the carbon-nitrogen bond in imidazolone-5-propanoate to yield N-formimidoyl-L-glutamate. It is the third step in the universal histidine degradation pathway. The chain is Imidazolonepropionase from Klebsiella pneumoniae subsp. pneumoniae (strain ATCC 700721 / MGH 78578).